A 319-amino-acid polypeptide reads, in one-letter code: Taste receptor type 2 member 7 (319 aa).

At 1–9 the chain is on the extracellular side; it reads MADKVQTTL. The helical transmembrane segment at 10 to 30 threads the bilayer; that stretch reads LFLAVGEFSVGILGNAFIGLV. Over 31-55 the chain is Cytoplasmic; that stretch reads NCMDWVKKRKIASIDLILTSLAISR. The helical transmembrane segment at 56 to 76 threads the bilayer; that stretch reads ICLLCVILLDCFILVLYPDVY. Residues 77-94 are Extracellular-facing; the sequence is ATGKEMRIIDFFWTLTNH. A helical transmembrane segment spans residues 95–115; the sequence is LSIWFATCLSIYYXFRIANFF. The Cytoplasmic segment spans residues 116–128; that stretch reads HPLFLWMKWRIDR. Residues 129–149 form a helical membrane-spanning segment; sequence VISWILLGCVVLSVFISLPAT. At 150 to 187 the chain is on the extracellular side; the sequence is ENLNADFRFCVKAKRKTNLTWSCRVNKTQHASTKLFLN. N-linked (GlcNAc...) asparagine glycans are attached at residues Asn167 and Asn175. The helical transmembrane segment at 188 to 208 threads the bilayer; it reads LATLLPFCVCLMSFFLLILSL. Residues 209 to 235 are Cytoplasmic-facing; that stretch reads RRHIRRMQLSATGCRDPSTEAHVRALK. The helical transmembrane segment at 236–256 threads the bilayer; that stretch reads AVISFLLLFIAYYLSFLVATS. Over 257 to 266 the chain is Extracellular; sequence SYFMPETELA. Residues 267-287 traverse the membrane as a helical segment; the sequence is VIFGESIALIYPSSHSFILIL. Topologically, residues 288–319 are cytoplasmic; it reads GNNKLRHASLKVIWKVMSILKGRKFQQHKQIG.

Belongs to the G-protein coupled receptor T2R family.

It is found in the membrane. Its function is as follows. Gustducin-coupled receptor implicated in the perception of bitter compounds in the oral cavity and the gastrointestinal tract. Signals through PLCB2 and the calcium-regulated cation channel TRPM5. This chain is Taste receptor type 2 member 7 (TAS2R7), found in Pan troglodytes (Chimpanzee).